The sequence spans 226 residues: tRNA (guanine-N(7)-)-methyltransferase (226 aa).

S-adenosyl-L-methionine-binding residues include Glu-57, Glu-82, Asp-109, and Asp-132. Asp-132 is an active-site residue. Substrate-binding positions include Lys-136, Asp-168, and 205-208 (TKFE).

The protein belongs to the class I-like SAM-binding methyltransferase superfamily. TrmB family.

The enzyme catalyses guanosine(46) in tRNA + S-adenosyl-L-methionine = N(7)-methylguanosine(46) in tRNA + S-adenosyl-L-homocysteine. It participates in tRNA modification; N(7)-methylguanine-tRNA biosynthesis. Its function is as follows. Catalyzes the formation of N(7)-methylguanine at position 46 (m7G46) in tRNA. This Legionella pneumophila subsp. pneumophila (strain Philadelphia 1 / ATCC 33152 / DSM 7513) protein is tRNA (guanine-N(7)-)-methyltransferase.